The primary structure comprises 432 residues: Phosphoribosylamine--glycine ligase (432 aa).

An ATP-grasp domain is found at 110–316 (RNFMKDNDIE…MIDVMSAVVN (207 aa)). 137–194 (IEELGSVAIKPAGLTGGKGVKVMGDQLPDTGAAYDYAVSLLDGDNVVVEENLVGEEFT) is a binding site for ATP. Positions 274, 286, and 288 each coordinate Mg(2+). Residues Q274, E286, and N288 each coordinate Mn(2+).

This sequence belongs to the GARS family. Requires Mg(2+) as cofactor. It depends on Mn(2+) as a cofactor.

It catalyses the reaction 5-phospho-beta-D-ribosylamine + glycine + ATP = N(1)-(5-phospho-beta-D-ribosyl)glycinamide + ADP + phosphate + H(+). It participates in purine metabolism; IMP biosynthesis via de novo pathway; N(1)-(5-phospho-D-ribosyl)glycinamide from 5-phospho-alpha-D-ribose 1-diphosphate: step 2/2. This Methanococcoides burtonii (strain DSM 6242 / NBRC 107633 / OCM 468 / ACE-M) protein is Phosphoribosylamine--glycine ligase.